The chain runs to 265 residues: Type II pantothenate kinase (265 aa).

Residue 6-13 (DAGGTLIK) participates in ATP binding. The active-site Proton acceptor is the E70. ATP is bound by residues T99, 121-125 (GGMIQ), Y137, and S225.

It belongs to the type II pantothenate kinase family. Homodimer.

Its subcellular location is the cytoplasm. The catalysed reaction is (R)-pantothenate + ATP = (R)-4'-phosphopantothenate + ADP + H(+). The protein operates within cofactor biosynthesis; coenzyme A biosynthesis; CoA from (R)-pantothenate: step 1/5. Its function is as follows. Catalyzes the phosphorylation of pantothenate (Pan), the first step in CoA biosynthesis. This Staphylococcus saprophyticus subsp. saprophyticus (strain ATCC 15305 / DSM 20229 / NCIMB 8711 / NCTC 7292 / S-41) protein is Type II pantothenate kinase.